We begin with the raw amino-acid sequence, 378 residues long: MEPLCNASEPPLRPEARSSGNGDLQFLGWNVPPDQIQYIPEHWLTQLEPPASMHYMLGVFYIFLFCASTVGNGMVIWIFSTSKSLRTPSNMFVLNLAVFDLIMCLKAPIFIYNSFHRGFALGNTWCQIFASIGSYSGIGAGMTNAAIGYDRYNVITKPMNRNMTFTKAVIMNIIIWLYCTPWVVLPLTQFWDRFVPEGYLTSCSFDYLSDNFDTRLFVGTIFFFSFVCPTLMILYYYSQIVGHVFSHEKALREQAKKMNVESLRSNVDKSKETAEIRIAKAAITICFLFFVSWTPYGVMSLIGAFGDKSLLTPGATMIPACTCKLVACIDPFVYAISHPRYRLELQKRCPWLGVNEKSGEISSAQSTTTQEQQQTTAA.

Over 1 to 53 the chain is Extracellular; the sequence is MEPLCNASEPPLRPEARSSGNGDLQFLGWNVPPDQIQYIPEHWLTQLEPPASM. A glycan (N-linked (GlcNAc...) asparagine) is linked at N6. The helical transmembrane segment at 54 to 78 threads the bilayer; sequence HYMLGVFYIFLFCASTVGNGMVIWI. Residues 79–90 lie on the Cytoplasmic side of the membrane; that stretch reads FSTSKSLRTPSN. The chain crosses the membrane as a helical span at residues 91-111; it reads MFVLNLAVFDLIMCLKAPIFI. Residues 112 to 127 lie on the Extracellular side of the membrane; the sequence is YNSFHRGFALGNTWCQ. C126 and C203 are disulfide-bonded. The chain crosses the membrane as a helical span at residues 128-148; it reads IFASIGSYSGIGAGMTNAAIG. At 149–167 the chain is on the cytoplasmic side; sequence YDRYNVITKPMNRNMTFTK. A helical transmembrane segment spans residues 168–192; sequence AVIMNIIIWLYCTPWVVLPLTQFWD. Over 193-216 the chain is Extracellular; it reads RFVPEGYLTSCSFDYLSDNFDTRL. A helical membrane pass occupies residues 217 to 244; the sequence is FVGTIFFFSFVCPTLMILYYYSQIVGHV. Residues 245–280 lie on the Cytoplasmic side of the membrane; the sequence is FSHEKALREQAKKMNVESLRSNVDKSKETAEIRIAK. A helical transmembrane segment spans residues 281-304; sequence AAITICFLFFVSWTPYGVMSLIGA. Residues 305-312 lie on the Extracellular side of the membrane; sequence FGDKSLLT. A helical membrane pass occupies residues 313 to 337; it reads PGATMIPACTCKLVACIDPFVYAIS. Residue K324 is modified to N6-(retinylidene)lysine. At 338–378 the chain is on the cytoplasmic side; that stretch reads HPRYRLELQKRCPWLGVNEKSGEISSAQSTTTQEQQQTTAA.

This sequence belongs to the G-protein coupled receptor 1 family. Opsin subfamily. Phosphorylated on some or all of the serine and threonine residues present in the C-terminal region.

The protein localises to the membrane. Visual pigments are the light-absorbing molecules that mediate vision. They consist of an apoprotein, opsin, covalently linked to cis-retinal. This chain is Opsin Rh4 (Rh4), found in Drosophila melanogaster (Fruit fly).